The chain runs to 191 residues: Programmed cell death protein 6 (191 aa).

Residue Ala-2 is modified to N-acetylalanine. EF-hand domains are found at residues 23 to 58, 59 to 89, 90 to 125, 126 to 161, and 162 to 191; these read PDQSFLWNVFQRVDKDRSGVISDTELQQALSNGTWT, PFNPVTVRSIISMFDRENKAGVNFSEFTGVW, KYITDWQNVFRTYDRDNSGMIDKNELKQALSGFGYR, LSDQFHDILIRKFDRQGRGQIAFDDFIQGCIVLQRL, and TDIFRRYDTDQDGWIQVSYEQYLSMVFSIV. Ca(2+)-binding residues include Asp-36, Asp-38, Ser-40, Val-42, and Glu-47. Positions 103, 105, 107, 109, and 114 each coordinate Ca(2+). Mg(2+) contacts are provided by Asp-169, Asp-171, Asp-173, and Trp-175.

Homodimer and heterodimer; heterodimerizes (via the EF-hand 5) with PEF1. Isoform 1 and isoform 2 self-associate; probably forming homodimers. Interacts with CPNE4 (via VWFA domain). Interacts with PDCD6IP; the interaction is calcium-dependent. Interacts with RBM22. Interacts with PLSCR4. Interacts with ANXA7 and TSG101. Interacts with DAPK1. Interacts with SEC31A; the interaction is calcium-dependent and promotes monoubiquitination of SEC31A. Interacts with ANXA11 (via N-terminus); the interaction is calcium-dependent. Interacts with PLSCR3 (via N-terminus); the interaction is calcium-dependent. Interacts with MCOLN1; the interaction is calcium-dependent. Interacts with KDR; the interaction is calcium-dependent. Interacts with HEBP2; the interaction is calcium-dependent. Interacts with TFG. Isoform 1: Interacts with SHISA5, leading to stabilize it. Isoform 2: Does not interact with SHISA5. Isoform 2: Does not interact with PDCD6IP, TSG101, ANXA7 and ANXA11.

The protein localises to the endoplasmic reticulum membrane. The protein resides in the cytoplasmic vesicle. Its subcellular location is the COPII-coated vesicle membrane. It is found in the cytoplasm. It localises to the nucleus. The protein localises to the endosome. Its function is as follows. Calcium sensor that plays a key role in processes such as endoplasmic reticulum (ER)-Golgi vesicular transport, endosomal biogenesis or membrane repair. Acts as an adapter that bridges unrelated proteins or stabilizes weak protein-protein complexes in response to calcium: calcium-binding triggers exposure of apolar surface, promoting interaction with different sets of proteins thanks to 3 different hydrophobic pockets, leading to translocation to membranes. Involved in ER-Golgi transport by promoting the association between PDCD6IP and TSG101, thereby bridging together the ESCRT-III and ESCRT-I complexes. Together with PEF1, acts as a calcium-dependent adapter for the BCR(KLHL12) complex, a complex involved in ER-Golgi transport by regulating the size of COPII coats. In response to cytosolic calcium increase, the heterodimer formed with PEF1 interacts with, and bridges together the BCR(KLHL12) complex and SEC31 (SEC31A or SEC31B), promoting monoubiquitination of SEC31 and subsequent collagen export, which is required for neural crest specification. Involved in the regulation of the distribution and function of MCOLN1 in the endosomal pathway. Promotes localization and polymerization of TFG at endoplasmic reticulum exit site. Required for T-cell receptor-, Fas-, and glucocorticoid-induced apoptosis. May mediate Ca(2+)-regulated signals along the death pathway: interaction with DAPK1 can accelerate apoptotic cell death by increasing caspase-3 activity. Its role in apoptosis may however be indirect, as suggested by knockout experiments. May inhibit KDR/VEGFR2-dependent angiogenesis; the function involves inhibition of VEGF-induced phosphorylation of the Akt signaling pathway. In case of infection by HIV-1 virus, indirectly inhibits HIV-1 production by affecting viral Gag expression and distribution. In terms of biological role, has a lower Ca(2+) affinity than isoform 1. The chain is Programmed cell death protein 6 (PDCD6) from Homo sapiens (Human).